The following is a 179-amino-acid chain: Large ribosomal subunit protein uL5 (179 aa).

It belongs to the universal ribosomal protein uL5 family. In terms of assembly, part of the 50S ribosomal subunit; part of the 5S rRNA/L5/L18/L25 subcomplex. Contacts the 5S rRNA and the P site tRNA. Forms a bridge to the 30S subunit in the 70S ribosome.

Functionally, this is one of the proteins that bind and probably mediate the attachment of the 5S RNA into the large ribosomal subunit, where it forms part of the central protuberance. In the 70S ribosome it contacts protein S13 of the 30S subunit (bridge B1b), connecting the 2 subunits; this bridge is implicated in subunit movement. Contacts the P site tRNA; the 5S rRNA and some of its associated proteins might help stabilize positioning of ribosome-bound tRNAs. The sequence is that of Large ribosomal subunit protein uL5 from Nitrosospira multiformis (strain ATCC 25196 / NCIMB 11849 / C 71).